A 365-amino-acid polypeptide reads, in one-letter code: Holliday junction branch migration complex subunit RuvB (365 aa).

Residues 1–10 (MAIVSSNAAS) are compositionally biased toward polar residues. Residues 1 to 48 (MAIVSSNAASQRPRPDRGPDRVPNRVVDGARQAEDDRDPGRVGAKEDS) form a disordered region. Composition is skewed to basic and acidic residues over residues 13-23 (PRPDRGPDRVP) and 31-48 (RQAEDDRDPGRVGAKEDS). Residues 13 to 210 (PRPDRGPDRV…FGLIQRLEFY (198 aa)) form a large ATPase domain (RuvB-L) region. ATP-binding residues include L49, R50, G91, K94, T95, T96, R200, Y210, and R247. T95 serves as a coordination point for Mg(2+). A small ATPAse domain (RuvB-S) region spans residues 211-282 (GLEDLQAIVE…LVDEALTLHR (72 aa)). The interval 285-365 (GRGLDASDRR…GWPYPQEQAA (81 aa)) is head domain (RuvB-H). Positions 340 and 345 each coordinate DNA.

Belongs to the RuvB family. In terms of assembly, homohexamer. Forms an RuvA(8)-RuvB(12)-Holliday junction (HJ) complex. HJ DNA is sandwiched between 2 RuvA tetramers; dsDNA enters through RuvA and exits via RuvB. An RuvB hexamer assembles on each DNA strand where it exits the tetramer. Each RuvB hexamer is contacted by two RuvA subunits (via domain III) on 2 adjacent RuvB subunits; this complex drives branch migration. In the full resolvosome a probable DNA-RuvA(4)-RuvB(12)-RuvC(2) complex forms which resolves the HJ.

The protein localises to the cytoplasm. The enzyme catalyses ATP + H2O = ADP + phosphate + H(+). Its function is as follows. The RuvA-RuvB-RuvC complex processes Holliday junction (HJ) DNA during genetic recombination and DNA repair, while the RuvA-RuvB complex plays an important role in the rescue of blocked DNA replication forks via replication fork reversal (RFR). RuvA specifically binds to HJ cruciform DNA, conferring on it an open structure. The RuvB hexamer acts as an ATP-dependent pump, pulling dsDNA into and through the RuvAB complex. RuvB forms 2 homohexamers on either side of HJ DNA bound by 1 or 2 RuvA tetramers; 4 subunits per hexamer contact DNA at a time. Coordinated motions by a converter formed by DNA-disengaged RuvB subunits stimulates ATP hydrolysis and nucleotide exchange. Immobilization of the converter enables RuvB to convert the ATP-contained energy into a lever motion, pulling 2 nucleotides of DNA out of the RuvA tetramer per ATP hydrolyzed, thus driving DNA branch migration. The RuvB motors rotate together with the DNA substrate, which together with the progressing nucleotide cycle form the mechanistic basis for DNA recombination by continuous HJ branch migration. Branch migration allows RuvC to scan DNA until it finds its consensus sequence, where it cleaves and resolves cruciform DNA. The polypeptide is Holliday junction branch migration complex subunit RuvB (Synechococcus sp. (strain WH7803)).